The chain runs to 635 residues: Early transcription factor 70 kDa subunit (635 aa).

In terms of domain architecture, Helicase ATP-binding spans 32–185 (RSIIDENKSV…SNIISLMSDE (154 aa)). Residue 45-52 (HIMGSGKT) participates in ATP binding. The short motif at 135–138 (DEAH) is the DEXH box element. Residues 326-505 (KFKYFINKIE…TLPFDIKKLL (180 aa)) enclose the Helicase C-terminal domain.

This sequence belongs to the helicase family. VETF subfamily. Heterodimer of a 70 kDa and a 82 kDa subunit. Part of the early transcription complex composed of ETF, RAP94, and the DNA-directed RNA polymerase.

Its subcellular location is the virion. Acts with RNA polymerase to initiate transcription from early gene promoters. Is recruited by the RPO-associated protein of 94 kDa (RAP94) to form the early transcription complex, which also contains the core RNA polymerase. ETF heterodimer binds to early gene promoters. The protein is Early transcription factor 70 kDa subunit (VETFS) of Oryctolagus cuniculus (Rabbit).